A 174-amino-acid chain; its full sequence is I-Kappa-B like protein C1 (174 aa).

ANK repeat units lie at residues 56 to 88 (RGRQCIHMVALYDRKNAIMKIEILVNMGADINA) and 93 to 123 (TGNSLLHIAVKTKNYELAEWLCREPTVNLGA).

This sequence belongs to the polydnaviridae I-Kappa-B-like protein family.

Suppresses the host immune response through NF-kappa-B inactivation. Possesses ankyrin repeat domains required for NF-kappa-B binding but lacks the regulatory regions required for dissociation from NF-kappa-B and degradation. Therefore, prevents host NF-kappa-B release and subsequent activation. This Microplitis demolitor bracovirus (isolate Webb) (MdBV) protein is I-Kappa-B like protein C1 (C1).